Here is a 501-residue protein sequence, read N- to C-terminus: Probable cytosol aminopeptidase (501 aa).

K268 and D273 together coordinate Mn(2+). K280 is an active-site residue. D291, D350, and E352 together coordinate Mn(2+). The active site involves R354.

Belongs to the peptidase M17 family. Mn(2+) serves as cofactor.

The protein localises to the cytoplasm. The catalysed reaction is Release of an N-terminal amino acid, Xaa-|-Yaa-, in which Xaa is preferably Leu, but may be other amino acids including Pro although not Arg or Lys, and Yaa may be Pro. Amino acid amides and methyl esters are also readily hydrolyzed, but rates on arylamides are exceedingly low.. The enzyme catalyses Release of an N-terminal amino acid, preferentially leucine, but not glutamic or aspartic acids.. In terms of biological role, presumably involved in the processing and regular turnover of intracellular proteins. Catalyzes the removal of unsubstituted N-terminal amino acids from various peptides. The protein is Probable cytosol aminopeptidase of Pseudoalteromonas atlantica (strain T6c / ATCC BAA-1087).